Here is a 915-residue protein sequence, read N- to C-terminus: DNA (cytosine-5)-methyltransferase 2 (915 aa).

A compositionally biased stretch (low complexity) spans 1-14 (MAPSSPSSARPTRA). Positions 1–171 (MAPSSPSSAR…STAANKPEED (171 aa)) are disordered. Residues 15-30 (SGRERSAMAEEIHQNQ) are compositionally biased toward basic and acidic residues. The span at 42-57 (AKRRRKAASSGKKPKP) shows a compositional bias: basic residues. The segment covering 71 to 80 (KKGETEKTEP) has biased composition (basic and acidic residues). Over residues 81 to 108 (VVDDVCAEEPDEEELAMGEEEAEAEEQA) the composition is skewed to acidic residues. Over residues 109–119 (MQEVVAAVAAG) the composition is skewed to low complexity. A BAH domain is found at 188-313 (IVYCLGDDVY…VAYSTFANIS (126 aa)). Over residues 315 to 328 (ENGQSGSETASGIS) the composition is skewed to polar residues. The tract at residues 315 to 338 (ENGQSGSETASGISSDDAGLETSS) is disordered. Residues 345–876 (ATLLDLYSGC…YCLGQAYLGE (532 aa)) enclose the SAM-dependent MTase C5-type domain. The Chromo domain occupies 445–508 (FVVQKLIGIR…EGRKRKILPL (64 aa)). Cys521 is an active-site residue.

Belongs to the class I-like SAM-binding methyltransferase superfamily. C5-methyltransferase family.

It is found in the nucleus. It catalyses the reaction a 2'-deoxycytidine in DNA + S-adenosyl-L-methionine = a 5-methyl-2'-deoxycytidine in DNA + S-adenosyl-L-homocysteine + H(+). Its function is as follows. May be involved in the CpXpG methylation and in gene silencing. The protein is DNA (cytosine-5)-methyltransferase 2 (ZMET5) of Zea mays (Maize).